A 498-amino-acid chain; its full sequence is ATP synthase subunit beta, chloroplastic (498 aa).

An ATP-binding site is contributed by 172-179; it reads GGAGVGKT.

It belongs to the ATPase alpha/beta chains family. In terms of assembly, F-type ATPases have 2 components, CF(1) - the catalytic core - and CF(0) - the membrane proton channel. CF(1) has five subunits: alpha(3), beta(3), gamma(1), delta(1), epsilon(1). CF(0) has four main subunits: a(1), b(1), b'(1) and c(9-12).

The protein localises to the plastid. It localises to the chloroplast thylakoid membrane. It carries out the reaction ATP + H2O + 4 H(+)(in) = ADP + phosphate + 5 H(+)(out). In terms of biological role, produces ATP from ADP in the presence of a proton gradient across the membrane. The catalytic sites are hosted primarily by the beta subunits. The sequence is that of ATP synthase subunit beta, chloroplastic from Solanum tuberosum (Potato).